A 200-amino-acid chain; its full sequence is IYVPAPAPAVYAPYAARAYAAPAVVAAPAAPAVRAAAVPVAAAAPAAVAAAEYDPHPQYSYGYSVNDALTGDSKSQQESRDGDVVQGSYSLVEPDGSVRTVDYTADPVNGFNAVVHKEPGVHAPIAAPVPAPAVPAGHVRTTVAAPAVAAAPVVRAAIAAPAYATYAAAPIARTAVAAPAIAAAPIARAAYAYPYAGAYF.

3 consecutive repeat copies span residues 20–23, 26–29, and 43–46. The Chitin-binding type R&amp;R domain maps to 56–127; the sequence is HPQYSYGYSV…EPGVHAPIAA (72 aa). The tract at residues 70 to 89 is disordered; that stretch reads TGDSKSQQESRDGDVVQGSY. Tandem repeats lie at residues 126–129, 144–147, 150–153, 159–162, and 177–180.

Functionally, component of the cuticle of migratory locust which contains more than 100 different structural proteins. The sequence is that of Cuticle protein 19.8 from Locusta migratoria (Migratory locust).